An 87-amino-acid polypeptide reads, in one-letter code: Developmentally-regulated ectodermal protein (87 aa).

A signal peptide spans 1–16 (MKRLLVLTLVSAILMA).

The chain is Developmentally-regulated ectodermal protein from Tripneustes gratilla (Hawaian sea urchin).